The primary structure comprises 312 residues: Translation initiation factor IF3-2, chloroplastic (312 aa).

Residues 1-55 (MAGITSSTVGFNAVFTGITKTVSSHSLFSVDSKLCSLRLSKTELSFTNLTPSPRR) constitute a chloroplast transit peptide. Residues 253–263 (EMIRKPQEPPT) are compositionally biased toward basic and acidic residues. The tract at residues 253-312 (EMIRKPQEPPTRKKKKTAENEASASAAEITAEPEPEPEPEPEPEPEPEPEPEPEPLQIDS) is disordered. Residues 272–282 (NEASASAAEIT) show a composition bias toward low complexity. Positions 283–305 (AEPEPEPEPEPEPEPEPEPEPEP) are enriched in acidic residues.

The protein belongs to the IF-3 family. As to quaternary structure, monomer. Highly expressed in young, newly emerged leaves.

It is found in the plastid. Its subcellular location is the chloroplast. Its function is as follows. Chloroplast translation initiation factor that is essential for the coordination of leaf and chloroplast development. IF-3 binds to the 30S ribosomal subunit and shifts the equilibrium between 70S ribosomes and their 50S and 30S subunits in favor of the free subunits, thus enhancing the availability of 30S subunits on which protein synthesis initiation begins. This Arabidopsis thaliana (Mouse-ear cress) protein is Translation initiation factor IF3-2, chloroplastic.